Reading from the N-terminus, the 83-residue chain is UPF0270 protein CGSHiEE_07180 (83 aa).

It belongs to the UPF0270 family.

In Haemophilus influenzae (strain PittEE), this protein is UPF0270 protein CGSHiEE_07180.